The following is a 147-amino-acid chain: Hemoglobin subunit beta-A/B (147 aa).

One can recognise a Globin domain in the interval 2-147; the sequence is EWTDAERSAI…VVNALKRQYH (146 aa). Histidine 63 and histidine 92 together coordinate heme b.

It belongs to the globin family. In terms of assembly, heterotetramer of two alpha chains and two beta chains. As to expression, red blood cells.

Involved in oxygen transport from gills to the various peripheral tissues. This Cyprinus carpio (Common carp) protein is Hemoglobin subunit beta-A/B.